Reading from the N-terminus, the 222-residue chain is Sororin-like protein (222 aa).

The interval 1 to 189 is disordered; that stretch reads MEAPRSVGGR…VKQEKEDPVS (189 aa). Residues 24–33 are compositionally biased toward low complexity; that stretch reads SRSSQQSSSS. Residues 47–60 are compositionally biased toward basic and acidic residues; the sequence is RLVEQTTLKEKPKD. Residues 88–105 are compositionally biased toward low complexity; the sequence is ADLASPASAPSRPQTSRS. The Nuclear localization signal motif lies at 155–162; that stretch reads GKKTRQAS. Over residues 167–179 the composition is skewed to basic residues; it reads KTLKVAPKKRQRT. A C-terminal Sororin domain region spans residues 192–214; it reads CQDYIEKQKAYFAEIDAFELPVE.

The protein belongs to the sororin family.

The protein resides in the nucleus. In terms of biological role, regulator of sister chromatid cohesion in mitosis stabilizing cohesin complex association with chromatin. Antagonizes the action of WAPL proteins (WAPL1 and WAPL2) which stimulates cohesin dissociation from chromatin, particularly during somatic division in root cells and meiocytes during anaphase I. Required for centromeric sister chromatid cohesion during male meiosis (microsporogenesis). Cohesion ensures that chromosome partitioning is accurate in dividing cells and may play an important role in DNA repair. The sequence is that of Sororin-like protein from Arabidopsis thaliana (Mouse-ear cress).